The primary structure comprises 244 residues: HTH-type transcriptional repressor PhnF (244 aa).

The HTH gntR-type domain occupies 8-74 (RILKHQVVRA…RGRTTVVARP (67 aa)). The segment at residues 35-54 (EREIAEQFEVARETVRQALR) is a DNA-binding region (H-T-H motif).

It is found in the cytoplasm. Its function is as follows. Represses the phnDCE operon, involved in the uptake of phosphate, under conditions of phosphate availability in the cell. The protein is HTH-type transcriptional repressor PhnF (phnF) of Mycolicibacterium smegmatis (strain ATCC 700084 / mc(2)155) (Mycobacterium smegmatis).